We begin with the raw amino-acid sequence, 545 residues long: Threonine--tRNA ligase catalytic subunit (545 aa).

The interval D139–P433 is catalytic. Zn(2+)-binding residues include C231, H282, and H410.

This sequence belongs to the class-II aminoacyl-tRNA synthetase family. Homodimer. Probably interacts with its editing subunit. It depends on Zn(2+) as a cofactor.

It localises to the cytoplasm. The enzyme catalyses tRNA(Thr) + L-threonine + ATP = L-threonyl-tRNA(Thr) + AMP + diphosphate + H(+). Functionally, catalyzes the attachment of threonine to tRNA(Thr) in a two-step reaction: L-threonine is first activated by ATP to form Thr-AMP and then transferred to the acceptor end of tRNA(Thr). Also activates L-serine and transfers it to tRNA(Thr) but cannot deacylate incorrectly charged amino acid; unlike most archaea the editing function is found in a freestanding protein. The sequence is that of Threonine--tRNA ligase catalytic subunit from Saccharolobus islandicus (strain M.16.4 / Kamchatka #3) (Sulfolobus islandicus).